Here is a 325-residue protein sequence, read N- to C-terminus: Heat-inducible transcription repressor HrcA (325 aa).

This sequence belongs to the HrcA family.

In terms of biological role, negative regulator of class I heat shock genes (grpE-dnaK-dnaJ and groELS operons). Prevents heat-shock induction of these operons. In Staphylococcus aureus (strain bovine RF122 / ET3-1), this protein is Heat-inducible transcription repressor HrcA.